Consider the following 456-residue polypeptide: MSNSSMSVVILAAGKGTRMYSDLPKVLHPLAGKPMVQHVIDAAMKLGAQHVHLVYGHGGELLKKTLADPSLNWVLQAEQLGTGHAMQQAAPHFADDEDILMLYGDVPLISVDTLQRLLAAKPEGGIGLLTVKLDNPSGYGRIVRENGDVVGIVEHKDASDAQREINEINTGILVANGRDLKRWLSLLDNNNAQGEFYITDIIALAHADGKKIATVHPTRLSEVEGVNNRLQLSALERVFQTEQAEKLLLAGVMLLDPSRFDLRGELTHGRDITIDTNVIIEGHVILGDRVRIGTGCVLKNCVIGDDSEISPYTVLEDARLDANCTVGPFARLRPGAELAEGAHVGNFVEIKKARLGKGSKAGHLSYLGDAEIGAGVNIGAGTITCNYDGANKFKTIIGDDVFVGSDTQLVAPVTVANGATIGAGTTVTRDVAENELVISRVKQVHIQGWKRPVKKK.

The segment at 1 to 229 (MSNSSMSVVI…LSEVEGVNNR (229 aa)) is pyrophosphorylase. UDP-N-acetyl-alpha-D-glucosamine contacts are provided by residues 11–14 (LAAG), Lys-25, Gln-76, 81–82 (GT), 103–105 (YGD), Gly-140, Glu-154, Asn-169, and Asn-227. Mg(2+) is bound at residue Asp-105. Residue Asn-227 participates in Mg(2+) binding. The tract at residues 230 to 250 (LQLSALERVFQTEQAEKLLLA) is linker. The tract at residues 251-456 (GVMLLDPSRF…QGWKRPVKKK (206 aa)) is N-acetyltransferase. The UDP-N-acetyl-alpha-D-glucosamine site is built by Arg-333 and Lys-351. The active-site Proton acceptor is the His-363. Tyr-366 and Asn-377 together coordinate UDP-N-acetyl-alpha-D-glucosamine. Acetyl-CoA contacts are provided by residues Ala-380, 386–387 (NY), Ser-405, Ala-423, and Arg-440.

The protein in the N-terminal section; belongs to the N-acetylglucosamine-1-phosphate uridyltransferase family. This sequence in the C-terminal section; belongs to the transferase hexapeptide repeat family. As to quaternary structure, homotrimer. The cofactor is Mg(2+).

The protein localises to the cytoplasm. The enzyme catalyses alpha-D-glucosamine 1-phosphate + acetyl-CoA = N-acetyl-alpha-D-glucosamine 1-phosphate + CoA + H(+). It catalyses the reaction N-acetyl-alpha-D-glucosamine 1-phosphate + UTP + H(+) = UDP-N-acetyl-alpha-D-glucosamine + diphosphate. It participates in nucleotide-sugar biosynthesis; UDP-N-acetyl-alpha-D-glucosamine biosynthesis; N-acetyl-alpha-D-glucosamine 1-phosphate from alpha-D-glucosamine 6-phosphate (route II): step 2/2. It functions in the pathway nucleotide-sugar biosynthesis; UDP-N-acetyl-alpha-D-glucosamine biosynthesis; UDP-N-acetyl-alpha-D-glucosamine from N-acetyl-alpha-D-glucosamine 1-phosphate: step 1/1. The protein operates within bacterial outer membrane biogenesis; LPS lipid A biosynthesis. Functionally, catalyzes the last two sequential reactions in the de novo biosynthetic pathway for UDP-N-acetylglucosamine (UDP-GlcNAc). The C-terminal domain catalyzes the transfer of acetyl group from acetyl coenzyme A to glucosamine-1-phosphate (GlcN-1-P) to produce N-acetylglucosamine-1-phosphate (GlcNAc-1-P), which is converted into UDP-GlcNAc by the transfer of uridine 5-monophosphate (from uridine 5-triphosphate), a reaction catalyzed by the N-terminal domain. The protein is Bifunctional protein GlmU of Yersinia pseudotuberculosis serotype O:1b (strain IP 31758).